A 570-amino-acid chain; its full sequence is Probable glucomannan 4-beta-mannosyltransferase 11 (570 aa).

The chain crosses the membrane as a helical span at residues 57–77 (LAMTVMILAEKLFVAAVCLAV). The active site involves D157. The substrate site is built by D216 and D218. D310 is an active-site residue. 4 consecutive transmembrane segments (helical) span residues 389 to 409 (IAAH…SVWL), 412 to 432 (IEIP…CKAV), 522 to 542 (YSEI…VLYA), and 548 to 568 (IFLF…IGVC).

The protein belongs to the glycosyltransferase 2 family. Plant cellulose synthase-like A subfamily.

It localises to the golgi apparatus membrane. It catalyses the reaction GDP-mannose + (glucomannan)n = GDP + (glucomannan)n+1.. In terms of biological role, probable mannan synthase which consists of a 4-beta-mannosyltransferase activity on mannan using GDP-mannose. The beta-1,4-mannan product is the backbone for galactomannan synthesis by galactomannan galactosyltransferase. Galactomannan is a noncellulosic polysaccharides of plant cell wall. The sequence is that of Probable glucomannan 4-beta-mannosyltransferase 11 from Oryza sativa subsp. japonica (Rice).